The following is a 661-amino-acid chain: Transketolase (661 aa).

Residue His-28 coordinates substrate. Thiamine diphosphate contacts are provided by residues His-68 and 116–118; that span reads GPL. Mg(2+) is bound at residue Glu-157. Thiamine diphosphate contacts are provided by Gly-158 and Asn-187. Mg(2+) contacts are provided by Asn-187 and Ile-189. 2 residues coordinate substrate: His-261 and Arg-358. His-261 serves as a coordination point for thiamine diphosphate. Glu-412 acts as the Proton donor in catalysis. A thiamine diphosphate-binding site is contributed by Phe-438. Substrate contacts are provided by His-462, Asp-470, and Arg-521.

It belongs to the transketolase family. As to quaternary structure, homodimer. It depends on Mg(2+) as a cofactor. Ca(2+) serves as cofactor. Requires Mn(2+) as cofactor. Co(2+) is required as a cofactor. The cofactor is thiamine diphosphate.

The enzyme catalyses D-sedoheptulose 7-phosphate + D-glyceraldehyde 3-phosphate = aldehydo-D-ribose 5-phosphate + D-xylulose 5-phosphate. Catalyzes the transfer of a two-carbon ketol group from a ketose donor to an aldose acceptor, via a covalent intermediate with the cofactor thiamine pyrophosphate. The chain is Transketolase (tkt) from Treponema pallidum (strain Nichols).